Reading from the N-terminus, the 598-residue chain is Probable translation initiation factor IF-2 (598 aa).

The 219-residue stretch at 8 to 226 (IRQPIISVLG…VTGLAQRFLE (219 aa)) folds into the tr-type G domain. The segment at 17 to 24 (GHVDHGKT) is G1. 17–24 (GHVDHGKT) provides a ligand contact to GTP. The G2 stretch occupies residues 42 to 46 (GITQH). The G3 stretch occupies residues 81 to 84 (DTPG). GTP contacts are provided by residues 81–85 (DTPGH) and 135–138 (NKVD). A G4 region spans residues 135 to 138 (NKVD). A G5 region spans residues 203–205 (SGV).

The protein belongs to the TRAFAC class translation factor GTPase superfamily. Classic translation factor GTPase family. IF-2 subfamily.

Function in general translation initiation by promoting the binding of the formylmethionine-tRNA to ribosomes. Seems to function along with eIF-2. The polypeptide is Probable translation initiation factor IF-2 (Methanopyrus kandleri (strain AV19 / DSM 6324 / JCM 9639 / NBRC 100938)).